The chain runs to 394 residues: 1-deoxy-D-xylulose 5-phosphate reductoisomerase (394 aa).

NADPH-binding residues include T12, G13, S14, I15, K39, Q40, and N126. K127 serves as a coordination point for 1-deoxy-D-xylulose 5-phosphate. E128 contributes to the NADPH binding site. D152 is a Mn(2+) binding site. S153, E154, S183, and H206 together coordinate 1-deoxy-D-xylulose 5-phosphate. E154 is a binding site for Mn(2+). G212 contributes to the NADPH binding site. 1-deoxy-D-xylulose 5-phosphate-binding residues include S219, N224, K225, and E228. E228 lines the Mn(2+) pocket.

Belongs to the DXR family. It depends on Mg(2+) as a cofactor. Requires Mn(2+) as cofactor.

It carries out the reaction 2-C-methyl-D-erythritol 4-phosphate + NADP(+) = 1-deoxy-D-xylulose 5-phosphate + NADPH + H(+). It participates in isoprenoid biosynthesis; isopentenyl diphosphate biosynthesis via DXP pathway; isopentenyl diphosphate from 1-deoxy-D-xylulose 5-phosphate: step 1/6. Its function is as follows. Catalyzes the NADPH-dependent rearrangement and reduction of 1-deoxy-D-xylulose-5-phosphate (DXP) to 2-C-methyl-D-erythritol 4-phosphate (MEP). In Neisseria gonorrhoeae (strain ATCC 700825 / FA 1090), this protein is 1-deoxy-D-xylulose 5-phosphate reductoisomerase.